Consider the following 438-residue polypeptide: MAFSPFGHPYGSTSQFLVSASSSATCCETAPRPVSDVASASTSASTLCCTPYDSRLLGSARPELGAALGIYGAPYAAAQSYPGYLTYGPEPPTLCGALNPQYEFKDAAGSFAPSLTQPGAYYPYETTLGQYQYDRYGGVELSSAGRRKNATRESTSALKAWLHEHRKNPYPTKGEKIMLAIITKMTLTQVSTWFANARRRLKKENKMTWAPKNKGGEERKADSGEDSLGCLNGDTKDATASQEARGLRLSDLEDLEEEEEEEEAEEEAAVSAARRLADFQKSTQPLPAPCAAAQERCLESRECGLGLPRFSFTEAPQSGEADFITAEPGGPTMILHYPSGHKPRIWSLAHTAAASAVESAPSTPPRAQSPECHMIPRQPSSIRRLLVPRDSEGEEDSPAAKAFGNSTFTLQGLPLNCAPYPRRREPEVRFQYPSGAEG.

Residues 143–205 (SAGRRKNATR…NARRRLKKEN (63 aa)) constitute a DNA-binding region (homeobox). 2 disordered regions span residues 205–270 (NKMT…EAAV) and 388–438 (PRDS…GAEG). Residues 214–223 (KGGEERKADS) are compositionally biased toward basic and acidic residues. The segment covering 252–268 (LEDLEEEEEEEEAEEEA) has biased composition (acidic residues).

The protein belongs to the TALE/IRO homeobox family. As to expression, expressed in a subset of retinal ganglion cells and bipolar cells; including in type 2 and type 3a bipolar cells.

The protein resides in the nucleus. In terms of biological role, transcription factor. Binds to the iroquois binding site (IBS) motif of target genes to regulate gene expression; functions as a transcriptional activator or repressor. Modulates expression of RCVRN, VSX1, BHLHE22/BHLHB5 and TACR3/Nk3r. Required downstream of retinal bipolar cell specification for the terminal differentiation of type 2, type 3a and possibly type 6 bipolar cells. This chain is Iroquois-class homeodomain protein IRX-6 (Irx6), found in Mus musculus (Mouse).